We begin with the raw amino-acid sequence, 303 residues long: Dihydroorotate dehydrogenase B (NAD(+)), catalytic subunit (303 aa).

FMN is bound by residues Ser21 and 45-46 (KG). Substrate contacts are provided by residues Lys45 and 69–73 (NCIGL). FMN-binding residues include Asn98 and Asn126. Asn126 is a binding site for substrate. Cys129 serves as the catalytic Nucleophile. Positions 165 and 191 each coordinate FMN. Substrate is bound at residue 192–193 (NT). FMN-binding positions include Gly217 and 243-244 (GG).

It belongs to the dihydroorotate dehydrogenase family. Type 1 subfamily. As to quaternary structure, heterotetramer of 2 PyrK and 2 PyrD type B subunits. FMN is required as a cofactor.

The protein localises to the cytoplasm. It carries out the reaction (S)-dihydroorotate + NAD(+) = orotate + NADH + H(+). It functions in the pathway pyrimidine metabolism; UMP biosynthesis via de novo pathway; orotate from (S)-dihydroorotate (NAD(+) route): step 1/1. Functionally, catalyzes the conversion of dihydroorotate to orotate with NAD(+) as electron acceptor. The chain is Dihydroorotate dehydrogenase B (NAD(+)), catalytic subunit (pyrD) from Brachyspira hyodysenteriae (strain ATCC 49526 / WA1).